Here is a 364-residue protein sequence, read N- to C-terminus: Anthranilate phosphoribosyltransferase 1 (364 aa).

Residues glycine 102, 105-106, threonine 110, 112-115, 130-138, and serine 142 each bind 5-phospho-alpha-D-ribose 1-diphosphate; these read GD, NIST, and KHGNRSASS. Anthranilate is bound at residue glycine 102. Serine 114 is a binding site for Mg(2+). Residue asparagine 133 coordinates anthranilate. Position 188 (arginine 188) interacts with anthranilate. Residues aspartate 247 and glutamate 248 each contribute to the Mg(2+) site.

The protein belongs to the anthranilate phosphoribosyltransferase family. As to quaternary structure, homodimer. Requires Mg(2+) as cofactor.

It catalyses the reaction N-(5-phospho-beta-D-ribosyl)anthranilate + diphosphate = 5-phospho-alpha-D-ribose 1-diphosphate + anthranilate. It participates in amino-acid biosynthesis; L-tryptophan biosynthesis; L-tryptophan from chorismate: step 2/5. Functionally, catalyzes the transfer of the phosphoribosyl group of 5-phosphorylribose-1-pyrophosphate (PRPP) to anthranilate to yield N-(5'-phosphoribosyl)-anthranilate (PRA). This is Anthranilate phosphoribosyltransferase 1 from Nostoc sp. (strain PCC 7120 / SAG 25.82 / UTEX 2576).